Reading from the N-terminus, the 239-residue chain is tRNA (guanine-N(7)-)-methyltransferase (239 aa).

4 residues coordinate S-adenosyl-L-methionine: Glu69, Glu94, Asp121, and Asp144. Residue Asp144 is part of the active site. Lys148 contacts substrate. An interaction with RNA region spans residues 150–155 (RHNKRR). Substrate is bound by residues Asp180 and 217 to 220 (TKFE).

The protein belongs to the class I-like SAM-binding methyltransferase superfamily. TrmB family. In terms of assembly, monomer.

The enzyme catalyses guanosine(46) in tRNA + S-adenosyl-L-methionine = N(7)-methylguanosine(46) in tRNA + S-adenosyl-L-homocysteine. It participates in tRNA modification; N(7)-methylguanine-tRNA biosynthesis. Catalyzes the formation of N(7)-methylguanine at position 46 (m7G46) in tRNA. This Shigella flexneri serotype 5b (strain 8401) protein is tRNA (guanine-N(7)-)-methyltransferase.